Reading from the N-terminus, the 216-residue chain is Acetate CoA-transferase subunit beta (216 aa).

Glu-46 is an active-site residue.

This sequence belongs to the 3-oxoacid CoA-transferase subunit B family. In terms of assembly, heterotetramer composed of two alpha subunits (AtoD) and two beta subunits (AtoA).

Its subcellular location is the cytoplasm. It catalyses the reaction an acyl-CoA + acetate = a carboxylate + acetyl-CoA. The catalysed reaction is acetoacetate + acetyl-CoA = acetoacetyl-CoA + acetate. The enzyme catalyses butanoate + acetyl-CoA = butanoyl-CoA + acetate. It carries out the reaction acetoacetate + butanoyl-CoA = acetoacetyl-CoA + butanoate. Its pathway is lipid metabolism; short-chain fatty acid metabolism. Its activity is regulated as follows. Inhibited by p-chloromercuribenzoate. In terms of biological role, coenzyme A transferase which is involved in short-chain fatty acid degradation and catalyzes the activation of short-chain fatty acids to their respective CoA thiolesters. During acetoacetate degradation, catalyzes the transfer of CoA from acetyl-CoA to acetoacetate by a mechanism involving a covalent enzyme-CoA compound as a reaction intermediate. Utilizes a variety of short chain acyl-CoA and carboxylic acid substrates but exhibits maximal activity with normal and 3-keto substrates. This chain is Acetate CoA-transferase subunit beta, found in Escherichia coli (strain K12).